The sequence spans 172 residues: MAFYLSFLMAALVGGMIAIASNPAPYFAAFGLVVVAGVGCGILVSYGGSFLSLILFLIYLGGMLVVFAYSAALAAEPFPEAWGDRVVFWRVMVYGLVVIVAAGFLLTGDTGLLMSVDAFKEFSVIRADVSGVAMMYSSGGKMLVICAWVLLLTLFVVLEVTRGLSYGVLRAI.

A run of 5 helical transmembrane segments spans residues 1-21, 24-44, 53-73, 86-106, and 140-160; these read MAFY…AIAS, APYF…GILV, LILF…SAAL, VVFW…GFLL, and GKML…VLEV.

Belongs to the complex I subunit 6 family. As to quaternary structure, core subunit of respiratory chain NADH dehydrogenase (Complex I) which is composed of 45 different subunits.

The protein localises to the mitochondrion inner membrane. It carries out the reaction a ubiquinone + NADH + 5 H(+)(in) = a ubiquinol + NAD(+) + 4 H(+)(out). Core subunit of the mitochondrial membrane respiratory chain NADH dehydrogenase (Complex I) which catalyzes electron transfer from NADH through the respiratory chain, using ubiquinone as an electron acceptor. Essential for the catalytic activity and assembly of complex I. In Danio rerio (Zebrafish), this protein is NADH-ubiquinone oxidoreductase chain 6 (mt-nd6).